Reading from the N-terminus, the 474-residue chain is Dihydrolipoyl dehydrogenase (474 aa).

Residues 34–51, Lys-60, and Gly-124 each bind FAD; that span reads EGNPYDDPKGEARLGGTC. Cys-51 and Cys-56 are joined by a disulfide. Residues 189 to 193, Glu-212, Val-246, and 278 to 281 each bind NAD(+); these read GAGVI and SVGR. Residues Asp-321 and Ala-329 each coordinate FAD. His-453 serves as the catalytic Proton acceptor.

It belongs to the class-I pyridine nucleotide-disulfide oxidoreductase family. It depends on FAD as a cofactor.

It is found in the cytoplasm. The catalysed reaction is N(6)-[(R)-dihydrolipoyl]-L-lysyl-[protein] + NAD(+) = N(6)-[(R)-lipoyl]-L-lysyl-[protein] + NADH + H(+). Functionally, the branched-chain alpha-keto dehydrogenase complex catalyzes the overall conversion of alpha-keto acids to acyl-CoA and CO(2). It contains multiple copies of 3 enzymatic components: branched-chain alpha-keto acid decarboxylase (E1), lipoamide acyltransferase (E2) and lipoamide dehydrogenase (E3). The protein is Dihydrolipoyl dehydrogenase (odhL) of Cupriavidus necator (strain ATCC 17699 / DSM 428 / KCTC 22496 / NCIMB 10442 / H16 / Stanier 337) (Ralstonia eutropha).